The following is a 321-amino-acid chain: Aspartate carbamoyltransferase catalytic subunit (321 aa).

Carbamoyl phosphate is bound by residues Arg-65 and Thr-66. Lys-93 contributes to the L-aspartate binding site. Residues Arg-115, His-143, and Gln-146 each coordinate carbamoyl phosphate. L-aspartate-binding residues include Arg-176 and Arg-230. Residues Gly-271 and Pro-272 each contribute to the carbamoyl phosphate site.

It belongs to the aspartate/ornithine carbamoyltransferase superfamily. ATCase family. In terms of assembly, heterododecamer (2C3:3R2) of six catalytic PyrB chains organized as two trimers (C3), and six regulatory PyrI chains organized as three dimers (R2).

It carries out the reaction carbamoyl phosphate + L-aspartate = N-carbamoyl-L-aspartate + phosphate + H(+). The protein operates within pyrimidine metabolism; UMP biosynthesis via de novo pathway; (S)-dihydroorotate from bicarbonate: step 2/3. Catalyzes the condensation of carbamoyl phosphate and aspartate to form carbamoyl aspartate and inorganic phosphate, the committed step in the de novo pyrimidine nucleotide biosynthesis pathway. This chain is Aspartate carbamoyltransferase catalytic subunit, found in Bartonella henselae (strain ATCC 49882 / DSM 28221 / CCUG 30454 / Houston 1) (Rochalimaea henselae).